The following is a 386-amino-acid chain: Succinate--CoA ligase [ADP-forming] subunit beta (386 aa).

The 235-residue stretch at 9 to 243 (KQLFRKYSIP…PAEDDPAEAE (235 aa)) folds into the ATP-grasp domain. ATP-binding positions include lysine 45, 52-54 (GRG), glutamate 98, valine 101, and glutamate 106. Mg(2+) is bound by residues asparagine 198 and aspartate 212. Residues asparagine 263 and 320–322 (GIL) each bind substrate.

Belongs to the succinate/malate CoA ligase beta subunit family. In terms of assembly, heterotetramer of two alpha and two beta subunits. The cofactor is Mg(2+).

The catalysed reaction is succinate + ATP + CoA = succinyl-CoA + ADP + phosphate. It catalyses the reaction GTP + succinate + CoA = succinyl-CoA + GDP + phosphate. It functions in the pathway carbohydrate metabolism; tricarboxylic acid cycle; succinate from succinyl-CoA (ligase route): step 1/1. Its function is as follows. Succinyl-CoA synthetase functions in the citric acid cycle (TCA), coupling the hydrolysis of succinyl-CoA to the synthesis of either ATP or GTP and thus represents the only step of substrate-level phosphorylation in the TCA. The beta subunit provides nucleotide specificity of the enzyme and binds the substrate succinate, while the binding sites for coenzyme A and phosphate are found in the alpha subunit. The protein is Succinate--CoA ligase [ADP-forming] subunit beta of Desulfotalea psychrophila (strain LSv54 / DSM 12343).